Here is a 113-residue protein sequence, read N- to C-terminus: MAKRNFTPKDILQKEFKPKMRGYDPADVDGFLDNVIKDYESFTKDNQQLSDENERLRAKVDELTKQVAVGATSPSSQPTSTVTNMDILKRLSNLERHVFGAQLDNNQNESHRL.

Residues 32 to 71 (LDNVIKDYESFTKDNQQLSDENERLRAKVDELTKQVAVGA) adopt a coiled-coil conformation.

The protein belongs to the GpsB family. Forms polymers through the coiled coil domains. Interacts with PBP1, MreC and EzrA.

The protein localises to the cytoplasm. Its function is as follows. Divisome component that associates with the complex late in its assembly, after the Z-ring is formed, and is dependent on DivIC and PBP2B for its recruitment to the divisome. Together with EzrA, is a key component of the system that regulates PBP1 localization during cell cycle progression. Its main role could be the removal of PBP1 from the cell pole after pole maturation is completed. Also contributes to the recruitment of PBP1 to the division complex. Not essential for septum formation. The chain is Cell cycle protein GpsB from Lactiplantibacillus plantarum (strain ATCC BAA-793 / NCIMB 8826 / WCFS1) (Lactobacillus plantarum).